A 196-amino-acid chain; its full sequence is Heat shock protein beta-8 (196 aa).

The disordered stretch occupies residues 1 to 28 (MADGQLPFPCSYPSRLRRDPFRDSPLSS). Ser-24 and Ser-57 each carry phosphoserine. Phosphothreonine is present on Thr-63. 2 positions are modified to asymmetric dimethylarginine: Arg-71 and Arg-78. The sHSP domain occupies 78-185 (RFGVPAEGRS…PFGESSFNNE (108 aa)). Residue Ser-87 is modified to Phosphoserine. The segment at 176–196 (PFGESSFNNELPQDNQEVTCS) is disordered. A compositionally biased stretch (polar residues) spans 178-196 (GESSFNNELPQDNQEVTCS).

Belongs to the small heat shock protein (HSP20) family. Monomer. Forms a ternary complex with BAG3 and HSPA1A. Component of the chaperone-assisted selective autophagy (CASA) complex consisting of BAG3, HSPA8/HSC70, HSPB8 and STUB1/CHIP. Interacts with HSPB1. Interacts with DNAJB6. Interacts with BAG3. In terms of tissue distribution, highly expressed in skeletal muscle, heart, uterus, liver, lung and ovary. Low levels found in stomach and brain. Not detected in small intestine, large intestine, kidney, spleen and testis. In the ovary, expression is concentrated in the endometrium and in the connective tissue between the circular and longitudinal muscles of the myometrium.

The protein resides in the cytoplasm. It is found in the nucleus. Its function is as follows. Involved in the chaperone-assisted selective autophagy (CASA), a crucial process for protein quality control, particularly in mechanical strained cells and tissues such as muscle. Displays temperature-dependent chaperone activity. The protein is Heat shock protein beta-8 (Hspb8) of Mus musculus (Mouse).